Reading from the N-terminus, the 673-residue chain is Pesticin receptor (673 aa).

A signal peptide spans 1–22 (MKMTRLYPLALGGLLLPAIANA). A TonB box motif is present at residues 30–37 (STLEVTAS). Residues 41 to 155 (SRSASANNVS…QGGIINIVTQ (115 aa)) enclose the TBDR plug domain. In terms of domain architecture, TBDR beta-barrel spans 160-672 (TPRGYIEGGV…TVGINTRIDF (513 aa)). The TonB C-terminal box motif lies at 657-673 (QVNMGRTVGINTRIDFF).

The protein belongs to the TonB-dependent receptor family.

It localises to the cell outer membrane. Receptor for the bacteriocin pesticin and for the siderophore yersiniabactin. In Yersinia enterocolitica serotype O:8 / biotype 1B (strain NCTC 13174 / 8081), this protein is Pesticin receptor (fyuA).